The sequence spans 153 residues: Bkd operon transcriptional regulator (153 aa).

The HTH asnC-type domain occupies 4 to 65 (LDRIDLKILR…RLDEERLSGA (62 aa)). Residues 23 to 42 (WRDLAQKVGLSLTPTLRRVR) constitute a DNA-binding region (H-T-H motif).

Positive regulator of the bkd operon for branched-chain keto acid dehydrogenase complex. This chain is Bkd operon transcriptional regulator (bkdR), found in Pseudomonas aeruginosa (strain ATCC 15692 / DSM 22644 / CIP 104116 / JCM 14847 / LMG 12228 / 1C / PRS 101 / PAO1).